Here is a 251-residue protein sequence, read N- to C-terminus: Spermatogenesis-associated protein 46 (251 aa).

The protein localises to the nucleus membrane. Its function is as follows. Plays a role in spermiogenesis and fertilization. The sequence is that of Spermatogenesis-associated protein 46 (SPATA46) from Macaca fascicularis (Crab-eating macaque).